An 838-amino-acid polypeptide reads, in one-letter code: MTGAEIEPSAQAKPEKKAGEEVIAGPERENDVPLVVRPKVRTQATTGARPKTETKSVPAARPKTEAQAMSGARPKTEVQVMGGARPKTEAQGITGARPKTDARAVGGARSKTDAKAIPGARPKDEAQAWAQSEFGTEAVSQAEGVSQTNAVAWPLATAESGSVTKSKGLSMDRELVNVDAETFPGTQGQKGIQPWFGPGEETNMGSWCYSRPRAREEASNESGFWSADETSTASSFWTGEETSVRSWPREESNTRSRHRAKHQTNPRSRPRSKQEAYVDSWSGSEDEASNPFSFWVGENTNNLFRPRVREEANIRSKLRTNREDCFESESEDEFYKQSWVLPGEEANSRFRHRDKEDPNTALKLRAQKDVDSDRVKQEPRFEEEVIIGSWFWAEKEASLEGGASAICESEPGTEEGAIGGSAYWAEEKSSLGAVAREEAKPESEEEAIFGSWFWDRDEACFDLNPCPVYKVSDRFRDAAEELNASSRPQTWDEVTVEFKPGLFHGVGFRSTSPFGIPEEASEMLEAKPKNLELSPEGEEQESLLQPDQPSPEFTFQYDPSYRSVREIREHLRARESAESESWSCSCIQCELKIGSEEFEEFLLLMDKIRDPFIHEISKIAMGMRSASQFTRDFIRDSGVVSLIETLLNYPSSRVRTSFLENMIHMAPPYPNLNMIETFICQVCEETLAHSVDSLEQLTGIRMLRHLTMTIDYHTLIANYMSGFLSLLTTANARTKFHVLKMLLNLSENPAVAKKLFSAKALSIFVGLFNIEETNDNIQIVIKMFQNISNIIKSGKMSLIDDDFSLEPLISAFREFEELAKQLQAQIDNQNDPEVGQQS.

Disordered stretches follow at residues 1-122, 218-292, 349-368, and 531-552; these read MTGA…GARP, ASNE…SNPF, RFRH…RAQK, and LELS…PSPE. Residues 13-31 show a composition bias toward basic and acidic residues; the sequence is KPEKKAGEEVIAGPEREND. Residues 220–245 show a composition bias toward polar residues; the sequence is NESGFWSADETSTASSFWTGEETSVR. Positions 255–271 are enriched in basic residues; that stretch reads RSRHRAKHQTNPRSRPR. Residues serine 282 and serine 284 each carry the phosphoserine modification. Polar residues predominate over residues 542–552; it reads SLLQPDQPSPE.

It belongs to the GPRASP family. In terms of assembly, interacts with cytoplasmic tails of a variety of G-protein coupled receptors such as muscarinic acetylcholine receptor M1/CHRM1 and calcitonin receptor/CALCR. In terms of tissue distribution, expressed in the brain.

Functionally, may play a role in regulation of a variety of G-protein coupled receptors. The chain is G-protein coupled receptor-associated sorting protein 2 (GPRASP2) from Homo sapiens (Human).